Here is a 259-residue protein sequence, read N- to C-terminus: tRNA (guanine-N(7)-)-methyltransferase (259 aa).

Residues 1 to 74 are disordered; sequence MGHHGQMHAQ…PAEDPDRPGP (74 aa). S-adenosyl-L-methionine-binding residues include glutamate 91, glutamate 116, asparagine 143, and aspartate 166. Residue aspartate 166 is part of the active site. Substrate is bound by residues lysine 170, aspartate 202, and 238–241; that span reads TKYE.

Belongs to the class I-like SAM-binding methyltransferase superfamily. TrmB family.

It catalyses the reaction guanosine(46) in tRNA + S-adenosyl-L-methionine = N(7)-methylguanosine(46) in tRNA + S-adenosyl-L-homocysteine. The protein operates within tRNA modification; N(7)-methylguanine-tRNA biosynthesis. Catalyzes the formation of N(7)-methylguanine at position 46 (m7G46) in tRNA. The chain is tRNA (guanine-N(7)-)-methyltransferase from Mycobacterium avium (strain 104).